Reading from the N-terminus, the 150-residue chain is Ribonuclease H (150 aa).

In terms of domain architecture, RNase H type-1 spans 1–141 (MKSIEVHTDG…VDVLARNQAI (141 aa)). 4 residues coordinate Mg(2+): D9, E47, D69, and D133.

It belongs to the RNase H family. In terms of assembly, monomer. It depends on Mg(2+) as a cofactor.

The protein resides in the cytoplasm. It catalyses the reaction Endonucleolytic cleavage to 5'-phosphomonoester.. Its function is as follows. Endonuclease that specifically degrades the RNA of RNA-DNA hybrids. This is Ribonuclease H from Xanthomonas axonopodis pv. citri (strain 306).